The chain runs to 499 residues: Tektin-like protein 1 (499 aa).

Coiled-coil stretches lie at residues 197 to 227 (SMLT…LKTL) and 297 to 317 (LNEA…MAKN). Y372 bears the Phosphotyrosine mark.

Microtubule inner protein component of sperm flagellar doublet microtubules.

Its subcellular location is the cytoplasm. The protein resides in the cytoskeleton. It is found in the flagellum axoneme. Microtubule inner protein (MIP) part of the dynein-decorated doublet microtubules (DMTs) in sperm flagellar axoneme, which is required for motile flagellum beating. Forms an extensive interaction network cross-linking the lumen of axonemal doublet microtubules. This chain is Tektin-like protein 1, found in Homo sapiens (Human).